The chain runs to 368 residues: MKKSELDVNQYLIRTDLAVETKEAMANQQAVPTKEIKGFIEKERDHGGIKIRTVDVTKEGAELSGKKEGRYLTLEAQGIRENDSEMQEKVSAVFAEEFSAFLENLNISKDASCLIVGLGNWNVTPDALGPMAVENLLVTRHLFKLQPENVQEGYRPVSAFAPGVMGITGIETSDIIKGVIEQSKPDFVIAIDALAARAVERVNTTIQISDTGIHPGSGVGNKRKDLSKDTLGVPVIAIGVPTVVDAVTIASDTVDYILKHFGREMKDNRPSRSLVPAGMTFGKKKVLTEDDLPDQKQRQSFLGIVGTLQEDEKRQLIHEVLSPLGHNLMVTPKEVDSFIDDMANVLANGLNTALHEKVSQENKGSYNH.

Residues 1–16 constitute a propeptide that is removed on maturation; the sequence is MKKSELDVNQYLIRTD.

It belongs to the peptidase A25 family. As to quaternary structure, homotetramer. Autoproteolytically processed. The inactive tetrameric zymogen termed p46 autoprocesses to a smaller form termed p41, which is active only during spore germination.

The catalysed reaction is Endopeptidase action with P4 Glu or Asp, P1 preferably Glu &gt; Asp, P1' hydrophobic and P2' Ala.. Its function is as follows. Initiates the degradation of small, acid-soluble proteins during spore germination. This Bacillus subtilis (strain 168) protein is Germination protease (gpr).